Consider the following 365-residue polypeptide: Glycerol dehydrogenase (365 aa).

D37, G94, K95, T116, and S119 together coordinate NAD(+). Residue D121 coordinates glycerol. Residues S125, L127, and Y131 each coordinate NAD(+). The Mn(2+) site is built by D171, H254, and H271. H254 lines the glycerol pocket.

Belongs to the iron-containing alcohol dehydrogenase family. In terms of assembly, homohexamer. It depends on Mn(2+) as a cofactor.

The catalysed reaction is glycerol + NAD(+) = dihydroxyacetone + NADH + H(+). The enzyme catalyses hydroxyacetone + NADH + H(+) = (S)-propane-1,2-diol + NAD(+). The protein operates within polyol metabolism; glycerol fermentation; glycerone phosphate from glycerol (oxidative route): step 1/2. With respect to regulation, inhibited by zinc. Functionally, catalyzes the NAD-dependent oxidation of glycerol to dihydroxyacetone (glycerone). Allows microorganisms to utilize glycerol as a source of carbon under anaerobic conditions. Exhibits a rather broad substrate specificity since it can also oxidize 1,2-propanediol and 2,3-butanediol and reduce dihydroxyacetone. Cannot use NADP(+) as an electron acceptor for the oxidation of glycerol. This chain is Glycerol dehydrogenase, found in Citrobacter freundii.